The following is a 211-amino-acid chain: Large ribosomal subunit protein eL13 (211 aa).

Position 16 is an N6-acetyllysine (Lys16). 2 positions are modified to phosphoserine: Ser52 and Ser77. Glycyl lysine isopeptide (Lys-Gly) (interchain with G-Cter in SUMO2) cross-links involve residues Lys123 and Lys145. Residue Lys174 forms a Glycyl lysine isopeptide (Lys-Gly) (interchain with G-Cter in SUMO1); alternate linkage. Glycyl lysine isopeptide (Lys-Gly) (interchain with G-Cter in SUMO2); alternate cross-links involve residues Lys174 and Lys177. At Lys177 the chain carries N6-acetyllysine; alternate.

Belongs to the eukaryotic ribosomal protein eL13 family. Component of the 60S large ribosomal subunit (LSU).

The protein localises to the cytoplasm. Functionally, component of the ribosome, a large ribonucleoprotein complex responsible for the synthesis of proteins in the cell. The small ribosomal subunit (SSU) binds messenger RNAs (mRNAs) and translates the encoded message by selecting cognate aminoacyl-transfer RNA (tRNA) molecules. The large subunit (LSU) contains the ribosomal catalytic site termed the peptidyl transferase center (PTC), which catalyzes the formation of peptide bonds, thereby polymerizing the amino acids delivered by tRNAs into a polypeptide chain. The nascent polypeptides leave the ribosome through a tunnel in the LSU and interact with protein factors that function in enzymatic processing, targeting, and the membrane insertion of nascent chains at the exit of the ribosomal tunnel. As part of the LSU, it is probably required for its formation and the maturation of rRNAs. Plays a role in bone development. The protein is Large ribosomal subunit protein eL13 (RPL13) of Bos taurus (Bovine).